A 462-amino-acid chain; its full sequence is Chromosomal replication initiator protein DnaA (462 aa).

Residues 1-83 (MSLSLWQQCL…LRFEVGSKPA (83 aa)) are domain I, interacts with DnaA modulators. Positions 83–125 (AVRAHSHPVTASVSAPVAPVTRSAPVRPSWDSSPAQPELSYRS) are domain II. Residues 105-127 (SAPVRPSWDSSPAQPELSYRSNV) are disordered. Positions 112–127 (WDSSPAQPELSYRSNV) are enriched in polar residues. Residues 126–342 (NVNPKHTFDN…GALNRVIANA (217 aa)) are domain III, AAA+ region. ATP is bound by residues Gly-170, Gly-172, Lys-173, and Thr-174. Residues 343-462 (NFTGRAITID…FSNLIRTLSS (120 aa)) form a domain IV, binds dsDNA region.

It belongs to the DnaA family. As to quaternary structure, oligomerizes as a right-handed, spiral filament on DNA at oriC.

It localises to the cytoplasm. Its function is as follows. Plays an essential role in the initiation and regulation of chromosomal replication. ATP-DnaA binds to the origin of replication (oriC) to initiate formation of the DNA replication initiation complex once per cell cycle. Binds the DnaA box (a 9 base pair repeat at the origin) and separates the double-stranded (ds)DNA. Forms a right-handed helical filament on oriC DNA; dsDNA binds to the exterior of the filament while single-stranded (ss)DNA is stabiized in the filament's interior. The ATP-DnaA-oriC complex binds and stabilizes one strand of the AT-rich DNA unwinding element (DUE), permitting loading of DNA polymerase. After initiation quickly degrades to an ADP-DnaA complex that is not apt for DNA replication. Binds acidic phospholipids. In Yersinia enterocolitica serotype O:8 / biotype 1B (strain NCTC 13174 / 8081), this protein is Chromosomal replication initiator protein DnaA.